A 433-amino-acid chain; its full sequence is tRNA-queuosine alpha-mannosyltransferase (433 aa).

The tract at residues Pro-194–Gly-244 is disordered. A compositionally biased stretch (polar residues) spans Ala-221–Ala-239.

This sequence belongs to the glycosyltransferase group 1 family. Glycosyltransferase 4 subfamily.

Its subcellular location is the cytoplasm. The protein localises to the nucleus. It carries out the reaction queuosine(34) in tRNA(Asp) + GDP-alpha-D-mannose = O-4''-alpha-D-mannosylqueuosine(34) in tRNA(Asp) + GDP + H(+). Its function is as follows. Glycosyltransferase that specifically catalyzes mannosylation of cytoplasmic tRNA(Asp) modified with queuosine at position 34 (queuosine(34)). Mannosylates the cyclopentene moiety of queuosine(34) in tRNA(Asp) to form mannosyl-queuosine(34). Mannosylation of queuosine(34) in tRNA(Asp) is required to slow-down elongation at cognate codons, GAC and GAU, thereby regulating protein translation. In Danio rerio (Zebrafish), this protein is tRNA-queuosine alpha-mannosyltransferase (gtdc1).